The sequence spans 294 residues: 2-oxo-3-(phosphooxy)propyl 3-oxoalkanoate synthase (294 aa).

It belongs to the AfsA family.

It carries out the reaction a medium-chain 3-oxoacyl-[ACP] + dihydroxyacetone phosphate = a (4-alkanoyl-5-oxo-2,5-dihydrofuran-3-yl)methyl phosphate + holo-[ACP] + H2O. Functionally, involved in the biosynthesis of virginiae butanolide (VB), a gamma-butyrolactone autoregulator that triggers the production of the streptogramin antibiotic virginiamycin. The protein is 2-oxo-3-(phosphooxy)propyl 3-oxoalkanoate synthase of Streptomyces virginiae (Streptomyces cinnamonensis).